We begin with the raw amino-acid sequence, 311 residues long: Tricarboxylate transport protein, mitochondrial (311 aa).

Residues 1–13 (MAAARAPRALTSA) constitute a propeptide, removed in mature form. Residues 1-15 (MAAARAPRALTSASP) show a composition bias toward low complexity. Residues 1-22 (MAAARAPRALTSASPGSGKAKL) are disordered. 3 Solcar repeats span residues 23–111 (THPG…LSNH), 122–208 (TRGL…LRNW), and 218–303 (MNPL…VVKL). Helical transmembrane passes span 29–46 (ILAG…TFPT), 86–105 (GLSS…FGTF), and 129–143 (LGAG…VCPM). At Ser156 the chain carries Phosphoserine. The next 3 helical transmembrane spans lie at 183-202 (GLTA…FFVM), 224-241 (GVFG…NTPL), and 278-297 (GTVP…FIIY).

The protein belongs to the mitochondrial carrier (TC 2.A.29) family. In terms of processing, possesses a short cleavable presequence, which, however, is found to be dispensable both for targeting to mitochondria and insertion into the inner membrane. However, the presequence is required to keep SLC25A1 in a soluble state and thus in an import-competent state. Mature SLC25A1 lacking the presequence is prone to aggregation.

Its subcellular location is the mitochondrion inner membrane. It is found in the mitochondrion membrane. It carries out the reaction (S)-malate(in) + citrate(out) = (S)-malate(out) + citrate(in). The enzyme catalyses D-threo-isocitrate(in) + citrate(out) = D-threo-isocitrate(out) + citrate(in). The catalysed reaction is citrate(out) + succinate(in) = citrate(in) + succinate(out). It catalyses the reaction phosphoenolpyruvate(in) + citrate(out) = phosphoenolpyruvate(out) + citrate(in). It carries out the reaction cis-aconitate(in) + citrate(out) = cis-aconitate(out) + citrate(in). The enzyme catalyses trans-aconitate(in) + citrate(out) = trans-aconitate(out) + citrate(in). The catalysed reaction is maleate(in) + citrate(out) = maleate(out) + citrate(in). Its function is as follows. Mitochondrial electroneutral antiporter that exports citrate from the mitochondria into the cytosol in exchange for malate. Also able to mediate the exchange of citrate for isocitrate, phosphoenolpyruvate, cis-aconitate and to a lesser extent trans-aconitate, maleate and succinate. In the cytoplasm, citrate plays important roles in fatty acid and sterol synthesis, regulation of glycolysis, protein acetylation, and other physiopathological processes. This is Tricarboxylate transport protein, mitochondrial (SLC25A1) from Bos taurus (Bovine).